We begin with the raw amino-acid sequence, 475 residues long: UDP-glucosyltransferase 102 (475 aa).

UDP-alpha-D-glucose-binding positions include Ser278, 344–345 (WA), 362–370 (HCGWNSTLE), and 384–387 (YGEQ).

The protein belongs to the UDP-glycosyltransferase family.

The protein operates within secondary metabolite biosynthesis; terpenoid biosynthesis. Functionally, probable component of the triterpene saponins (e.g. ginsenosides) biosynthetic pathway. No detectable activity toward protopanaxatriol (PPT). The chain is UDP-glucosyltransferase 102 (UGT102) from Panax ginseng (Korean ginseng).